We begin with the raw amino-acid sequence, 149 residues long: MHCPFCFAVDTKVIDSRLVGGGSSVRRRRQCLVCNERFTTFEVAELVMPRVVKSNDVREPFNEEKLRSGMLRALEKRPVSSDDVEMAINHIKSQLRATGEREVPSKMIGNLVMEQLKKLDKVAYIRFASVYRSFEDIKEFGEEIARLED.

A zinc finger lies at 3–34 (CPFCFAVDTKVIDSRLVGGGSSVRRRRQCLVC). Residues 49-139 (PRVVKSNDVR…VYRSFEDIKE (91 aa)) form the ATP-cone domain.

This sequence belongs to the NrdR family. Zn(2+) serves as cofactor.

Its function is as follows. Negatively regulates transcription of bacterial ribonucleotide reductase nrd genes and operons by binding to NrdR-boxes. The sequence is that of Transcriptional repressor NrdR from Shigella boydii serotype 18 (strain CDC 3083-94 / BS512).